A 411-amino-acid polypeptide reads, in one-letter code: KIN17-like protein (411 aa).

The C2H2-type zinc finger occupies 28–50; sequence CQMCQKQCRDENGFKCHCMSESH. A winged helix-turn-helix (wHTH) region spans residues 51–160; it reads QRQMQVFGQN…KERLKNKRVK (110 aa). Positions 147–183 form a coiled coil; the sequence is ETLFKERLKNKRVKSDLAEEEKQEREIQRQIERAAEK. Disordered regions lie at residues 182–211 and 232–286; these read EKLN…KKDE and VATG…EEEK. The segment covering 253 to 286 has biased composition (basic and acidic residues); it reads KVERGEKRKRSGDSGRSEKERRSALDELMKEEEK. The short motif at 259–262 is the Nuclear localization signal (NLS) element; the sequence is KRKR. The stretch at 265 to 294 forms a coiled coil; it reads DSGRSEKERRSALDELMKEEEKKKERMNRK. The tract at residues 301–352 is C-terminal subdomain A; sequence GIIVKVMSKALAEKGYYKQKGVVKKVIDNYVGEIKMLDSKHVLRVDQKELET. Positions 358–409 are C-terminal subdomain B; sequence GGMVKIVNGAYRGSNARLLGVDTEKFCAKVQIEKGVYDGRVIKSIEYEDICK.

This sequence belongs to the KIN17 family. As to quaternary structure, interacts with SPL7. In terms of tissue distribution, expressed in root vasculature, lateral roots, cotyledons, rosette leaves, cauline leaves, stems, sepals, style of pistils, mature pollen grains and siliques.

The protein resides in the nucleus speckle. Functionally, promotes the copper deficiency response by direct interaction with SPL7. Acts with SPL7 in a common pathway to promote copper-responsive genes and alleviate oxidative stress during copper-limiting periods. May promote SPL7 function when copper is limiting. Participates in the control of general plant growth and development, and in the response to counteract the negative effects of UV radiation. This chain is KIN17-like protein, found in Arabidopsis thaliana (Mouse-ear cress).